Reading from the N-terminus, the 469-residue chain is Alpha,alpha-trehalose-phosphate synthase [UDP-forming] (469 aa).

D-glucose 6-phosphate contacts are provided by Tyr87 and Asp141. Residues Arg279 and Lys284 each coordinate UDP. Positions 279 and 284 each coordinate UDP-alpha-D-glucose. Arg317 serves as a coordination point for D-glucose 6-phosphate. 378–386 contributes to the UDP-alpha-D-glucose binding site; sequence DGMNLVSYE. UDP is bound at residue 382–386; the sequence is LVSYE.

It belongs to the glycosyltransferase 20 family.

The catalysed reaction is D-glucose 6-phosphate + UDP-alpha-D-glucose = alpha,alpha-trehalose 6-phosphate + UDP + H(+). It functions in the pathway carbohydrate biosynthesis. Its function is as follows. Synthase catalytic subunit of the trehalose synthase complex that catalyzes the production of trehalose from glucose-6-phosphate and UDP-alpha-D-glucose in a two step process. The disaccharide trehalose serves as a storage carbohydrate that is mobilized during spore germination. This is Alpha,alpha-trehalose-phosphate synthase [UDP-forming] from Yarrowia lipolytica (strain CLIB 122 / E 150) (Yeast).